Here is a 363-residue protein sequence, read N- to C-terminus: Aminomethyltransferase (363 aa).

It belongs to the GcvT family. As to quaternary structure, the glycine cleavage system is composed of four proteins: P, T, L and H.

It carries out the reaction N(6)-[(R)-S(8)-aminomethyldihydrolipoyl]-L-lysyl-[protein] + (6S)-5,6,7,8-tetrahydrofolate = N(6)-[(R)-dihydrolipoyl]-L-lysyl-[protein] + (6R)-5,10-methylene-5,6,7,8-tetrahydrofolate + NH4(+). In terms of biological role, the glycine cleavage system catalyzes the degradation of glycine. In Staphylococcus epidermidis (strain ATCC 35984 / DSM 28319 / BCRC 17069 / CCUG 31568 / BM 3577 / RP62A), this protein is Aminomethyltransferase.